The following is a 232-amino-acid chain: Dehydrogenase OXI1 (232 aa).

An N-terminal signal peptide occupies residues 1–20; it reads MTETFKVAITFVSPSSEALA. L19 provides a ligand contact to NADP(+). N-linked (GlcNAc...) asparagine glycosylation is present at N28. NADP(+) contacts are provided by D42, N70, and K103. An N-linked (GlcNAc...) asparagine glycan is attached at N117. Residues S119 and S121 each act as proton donor in the active site. Positions 133, 137, and 168 each coordinate NADP(+). The Proton acceptor role is filled by Y133. Catalysis depends on K137, which acts as the Lowers pKa of active site Tyr.

This sequence belongs to the short-chain dehydrogenases/reductases (SDR) family.

The enzyme catalyses a primary alcohol + NAD(+) = an aldehyde + NADH + H(+). The catalysed reaction is a secondary alcohol + NAD(+) = a ketone + NADH + H(+). The protein operates within mycotoxin biosynthesis. Dehydrogenase; part of the Tox1A locus, one of the 2 loci that mediate the biosynthesis of T-toxin, a family of linear polyketides 37 to 45 carbons in length, of which the major component is 41 carbons, and which leads to high virulence to maize. One of the PKSs (PKS1 or PKS2) could synthesize a precursor, used subsequently by the other PKS as starter unit, to add additional carbons. Variability in the length of the final carbon backbone C35-47 could be achieved by varying the number of condensation cycles, or use of different starter or extender units or might be due to decarboxylation of the penultimate product, catalyzed by DEC1. Additional proteins are required for the biosynthesis of T-toxin, including oxidoreductases RED1, RED2, RED3, LAM1 and OXI1, as well as esterase TOX9. The polypeptide is Dehydrogenase OXI1 (Cochliobolus heterostrophus (strain C4 / ATCC 48331 / race T) (Southern corn leaf blight fungus)).